The chain runs to 316 residues: Apolipoprotein E (316 aa).

The first 18 residues, 1–18 (MKVLWVALVVALLAGCQA), serve as a signal peptide directing secretion. 8 consecutive repeat copies span residues 79–100 (VLME…GQLA), 101–122 (PMAQ…ARLG), 123–144 (SDME…AMLG), 145–166 (QSTE…KRLL), 167–188 (RDAD…EGAE), 189–210 (RSVS…SRAA), 211–232 (TLST…QKLH), and 233–254 (GRLE…QQLE). The tract at residues 79–254 (VLMEETMKEV…RLDKMRQQLE (176 aa)) is 8 X 22 AA approximate tandem repeats. The residue at position 142 (Met142) is a Methionine sulfoxide. Ser146 is modified (phosphoserine). Residues 157–167 (HLRKLRKRLLR) are LDL and other lipoprotein receptors binding. 161-164 (LRKR) contributes to the heparin binding site. Positions 209–289 (AATLSTQVGQ…SWFEPLVEDM (81 aa)) are lipid-binding and lipoprotein association. Thr211 is a glycosylation site (O-linked (GalNAc...) threonine). Residue 228–235 (RQKLHGRL) coordinates heparin. Residues 265–316 (SQIRLQAEAFQARLRSWFEPLVEDMQRQWAGLVEKVQLALHLSPTSPPSENH) form a homooligomerization region. A specificity for association with VLDL region spans residues 277 to 289 (RLRSWFEPLVEDM).

It belongs to the apolipoprotein A1/A4/E family. In terms of assembly, homotetramer. May interact with ABCA1; functionally associated with ABCA1 in the biogenesis of HDLs. May interact with APP/A4 amyloid-beta peptide; the interaction is extremely stable in vitro but its physiological significance is unclear. May interact with MAPT. May interact with MAP2. In the cerebrospinal fluid, interacts with secreted SORL1. Interacts with PMEL; this allows the loading of PMEL luminal fragment on ILVs to induce fibril nucleation. In terms of processing, APOE exists as multiple glycosylated and sialylated glycoforms within cells and in plasma. The extent of glycosylation and sialylation are tissue and context specific. Glycated in plasma VLDL. Post-translationally, phosphorylated by FAM20C in the extracellular medium.

Its subcellular location is the secreted. The protein resides in the extracellular space. The protein localises to the extracellular matrix. It localises to the extracellular vesicle. It is found in the endosome. Its subcellular location is the multivesicular body. In terms of biological role, APOE is an apolipoprotein, a protein associating with lipid particles, that mainly functions in lipoprotein-mediated lipid transport between organs via the plasma and interstitial fluids. APOE is a core component of plasma lipoproteins and is involved in their production, conversion and clearance. Apolipoproteins are amphipathic molecules that interact both with lipids of the lipoprotein particle core and the aqueous environment of the plasma. As such, APOE associates with chylomicrons, chylomicron remnants, very low density lipoproteins (VLDL) and intermediate density lipoproteins (IDL) but shows a preferential binding to high-density lipoproteins (HDL). It also binds a wide range of cellular receptors including the LDL receptor/LDLR and the very low-density lipoprotein receptor/VLDLR that mediate the cellular uptake of the APOE-containing lipoprotein particles. Finally, APOE also has a heparin-binding activity and binds heparan-sulfate proteoglycans on the surface of cells, a property that supports the capture and the receptor-mediated uptake of APOE-containing lipoproteins by cells. This Ovis aries musimon (Mouflon) protein is Apolipoprotein E (APOE).